The following is a 189-amino-acid chain: UPF0301 protein A1E_00140 (189 aa).

The protein belongs to the UPF0301 (AlgH) family.

This chain is UPF0301 protein A1E_00140, found in Rickettsia canadensis (strain McKiel).